Reading from the N-terminus, the 432-residue chain is 3-phosphoshikimate 1-carboxyvinyltransferase (432 aa).

K21, S22, and R26 together coordinate 3-phosphoshikimate. Phosphoenolpyruvate is bound at residue K21. Phosphoenolpyruvate-binding residues include G93 and R121. S166, Q168, D318, and K345 together coordinate 3-phosphoshikimate. Q168 lines the phosphoenolpyruvate pocket. The Proton acceptor role is filled by D318. Phosphoenolpyruvate-binding residues include R349 and R391.

This sequence belongs to the EPSP synthase family. In terms of assembly, monomer.

It is found in the cytoplasm. It catalyses the reaction 3-phosphoshikimate + phosphoenolpyruvate = 5-O-(1-carboxyvinyl)-3-phosphoshikimate + phosphate. The protein operates within metabolic intermediate biosynthesis; chorismate biosynthesis; chorismate from D-erythrose 4-phosphate and phosphoenolpyruvate: step 6/7. In terms of biological role, catalyzes the transfer of the enolpyruvyl moiety of phosphoenolpyruvate (PEP) to the 5-hydroxyl of shikimate-3-phosphate (S3P) to produce enolpyruvyl shikimate-3-phosphate and inorganic phosphate. In Persephonella marina (strain DSM 14350 / EX-H1), this protein is 3-phosphoshikimate 1-carboxyvinyltransferase.